The primary structure comprises 142 residues: Hemoglobin subunit alpha-5 (142 aa).

The region spanning 2–142 is the Globin domain; the sequence is TFSSAEKAAI…VSAVLVSKYR (141 aa). Residue His-59 participates in O2 binding. His-88 contacts heme b.

Belongs to the globin family. Heterotetramer of two alpha chains and two beta chains. In terms of tissue distribution, red blood cells.

Its function is as follows. This is a larval (tadpole) alpha-globin. This chain is Hemoglobin subunit alpha-5 (hba5), found in Xenopus laevis (African clawed frog).